Reading from the N-terminus, the 330-residue chain is D-alanine--D-alanine ligase (330 aa).

In terms of domain architecture, ATP-grasp spans 120-326; that stretch reads KLWYDALGIP…FKTFLQKAVL (207 aa). 150–205 contributes to the ATP binding site; that stretch reads AFKQWGGLFVKAACQGSSVGCYKVTSEEELAQAINGAFGYSQQVLVEKAVKPRELE. 3 residues coordinate Mg(2+): Asp-280, Glu-293, and Asn-295.

This sequence belongs to the D-alanine--D-alanine ligase family. Requires Mg(2+) as cofactor. Mn(2+) is required as a cofactor.

Its subcellular location is the cytoplasm. The enzyme catalyses 2 D-alanine + ATP = D-alanyl-D-alanine + ADP + phosphate + H(+). It functions in the pathway cell wall biogenesis; peptidoglycan biosynthesis. Functionally, cell wall formation. The protein is D-alanine--D-alanine ligase of Aliivibrio fischeri (strain MJ11) (Vibrio fischeri).